Reading from the N-terminus, the 217-residue chain is 3-oxoadipate CoA-transferase subunit B (217 aa).

Glutamate 50 is an active-site residue.

Belongs to the 3-oxoacid CoA-transferase subunit B family. Heterodimer.

The enzyme catalyses 3-oxoadipate + succinyl-CoA = 3-oxoadipyl-CoA + succinate. The protein operates within aromatic compound metabolism; beta-ketoadipate pathway; acetyl-CoA and succinyl-CoA from 3-oxoadipate: step 1/2. The polypeptide is 3-oxoadipate CoA-transferase subunit B (pcaJ) (Acinetobacter baylyi (strain ATCC 33305 / BD413 / ADP1)).